The sequence spans 372 residues: Cyclin-dependent kinase 9 (372 aa).

Positions Y19–F315 constitute a Protein kinase domain. An ATP-binding site is contributed by I25 to V33. K44 is modified (N6-acetyllysine; by EP300/CBP, PCAF/KAT2B and GCN5/KAT2A). Residues K48 and D104–C106 contribute to the ATP site. K48 bears the N6-acetyllysine; by PCAF/KAT2B and GCN5/KAT2A mark. D149 functions as the Proton acceptor in the catalytic mechanism. Residues A166–T191 form a T-loop region. ATP is bound at residue D167. Residue S175 is modified to Phosphoserine. T186 carries the phosphothreonine; by CaMK1D modification. Residues R343–F372 are disordered. S347 carries the phosphoserine; by CDK9 and PKA modification. Positions S347–T366 are enriched in polar residues. T350 is subject to Phosphothreonine; by CDK9. A Phosphoserine; by CDK9 modification is found at S353. T354 carries the post-translational modification Phosphothreonine; by CDK9. At S357 the chain carries Phosphoserine; by CDK9. T362 and T363 each carry phosphothreonine; by CDK9.

Belongs to the protein kinase superfamily. CMGC Ser/Thr protein kinase family. CDC2/CDKX subfamily. Component of the super elongation complex (SEC), at least composed of EAF1, EAF2, CDK9, MLLT3/AF9, AFF (AFF1 or AFF4), the P-TEFb complex and ELL (ELL, ELL2 or ELL3). Associates with CCNT1/cyclin-T1, CCNT2/cyclin-T2 (isoform A and isoform B) or CCNK/cyclin-K to form active P-TEFb. P-TEFb forms a complex with AFF4/AF5Q31 and is part of the super elongation complex (SEC). Component of a complex which is composed of at least 5 members: HTATSF1/Tat-SF1, P-TEFb complex, RNA pol II, SUPT5H, and NCL/nucleolin. Associates with UBR5 and forms a transcription regulatory complex composed of CDK9, RNAP II, UBR5 and TFIIS/TCEA1 that can stimulate target gene transcription (e.g. gamma fibrinogen/FGG) by recruiting their promoters. Component of the 7SK snRNP inactive complex which is composed of at least 8 members: P-TEFb (composed of CDK9 and CCNT1/cyclin-T1), HEXIM1, HEXIM2, LARP7, BCDIN3, SART3 proteins and 7SK and U6 snRNAs. This inactive 7SK snRNP complex can also interact with NCOR1 and HDAC3, probably to regulate CDK9 acetylation. Release of P-TEFb from P-TEFb/7SK snRNP complex requires both PP2B to transduce calcium Ca(2+) signaling in response to stimuli (e.g. UV or hexamethylene bisacetamide (HMBA)), and PPP1CA to dephosphorylate Thr-186. This released P-TEFb remains inactive in the pre-initiation complex with BRD4 until new Thr-186 phosphorylation occurs after the synthesis of a short RNA. Interacts with BRD4; to target chromatin binding. Interacts with JMJD6. Interacts with activated nuclear STAT3 and RELA/p65. Binds to AR and MYOD1. Forms a complex composed of CDK9, CCNT1/cyclin-T1, EP300 and GATA4 that stimulates hypertrophy in cardiomyocytes. The large PER complex involved in the repression of transcriptional termination is composed of at least PER2, CDK9, DDX5, DHX9, NCBP1 and POLR2A (active). Interacts with HSF1. Interacts with TBX21. Interacts with WDR43. Interacts with ZMYND8; the association appears to occur between homodimeric ZMYND8 and the activated form of the P-TEFb complex. In terms of processing, autophosphorylation at Thr-186, Ser-347, Thr-350, Ser-353, Thr-354 and Ser-357 triggers kinase activity by promoting cyclin and substrate binding upon conformational changes. Thr-186 phosphorylation requires the calcium Ca(2+) signaling pathway, including CaMK1D and calmodulin. This inhibition is relieved by Thr-29 dephosphorylation. Phosphorylation at Ser-175 inhibits kinase activity. Can be phosphorylated on either Thr-362 or Thr-363 but not on both simultaneously. Post-translationally, dephosphorylation of Thr-186 by PPM1A and PPM1B blocks CDK9 activity and may lead to CDK9 proteasomal degradation. However, PPP1CA-mediated Thr-186 dephosphorylation is required to release P-TEFb from its inactive P-TEFb/7SK snRNP complex. Dephosphorylated at Ser-347 by the PNUTS-PP1 complex during RNA polymerase II transcription pause-release. Dephosphorylation of C-terminus Thr and Ser residues by protein phosphatase-1 (PP1) triggers CDK9 activity. N6-acetylation of Lys-44 promotes kinase activity, whereas acetylation of both Lys-44 and Lys-48 mediated by PCAF/KAT2B and GCN5/KAT2A reduces kinase activity. The acetylated form associates with PML bodies in the nuclear matrix and with the transcriptionally silent HIV-1 genome; deacetylated upon transcription stimulation. Deacetylated by SIRT7, promoting the kinase activity and subsequent 'Ser-2' phosphorylation of the C-terminal domain (CTD) of RNA polymerase II. In terms of processing, polyubiquitinated and thus activated by UBR5. This ubiquitination is promoted by TFIIS/TCEA1 and favors 'Ser-2' phosphorylation of RPB1/POLR2A CTD. In terms of tissue distribution, expressed at high levels in brain and kidney.

Its subcellular location is the nucleus. It is found in the cytoplasm. The protein localises to the PML body. It catalyses the reaction L-seryl-[protein] + ATP = O-phospho-L-seryl-[protein] + ADP + H(+). It carries out the reaction L-threonyl-[protein] + ATP = O-phospho-L-threonyl-[protein] + ADP + H(+). The enzyme catalyses [DNA-directed RNA polymerase] + ATP = phospho-[DNA-directed RNA polymerase] + ADP + H(+). With respect to regulation, activation by Thr-186 phosphorylation is calcium Ca(2+) signaling pathway-dependent; actively inactivated by dephosphorylation mediated by PPP1CA, PPM1A and PPM1B. Reversibly repressed by acetylation at Lys-44 and Lys-48. Protein kinase involved in the regulation of transcription. Member of the cyclin-dependent kinase pair (CDK9/cyclin-T) complex, also called positive transcription elongation factor b (P-TEFb), which facilitates the transition from abortive to productive elongation by phosphorylating the CTD (C-terminal domain) of the large subunit of RNA polymerase II (RNAP II) POLR2A, SUPT5H and RDBP. This complex is inactive when in the 7SK snRNP complex form. Phosphorylates EP300, MYOD1, RPB1/POLR2A and AR and the negative elongation factors DSIF and NELFE. Regulates cytokine inducible transcription networks by facilitating promoter recognition of target transcription factors (e.g. TNF-inducible RELA/p65 activation and IL-6-inducible STAT3 signaling). Promotes RNA synthesis in genetic programs for cell growth, differentiation and viral pathogenesis. P-TEFb is also involved in cotranscriptional histone modification, mRNA processing and mRNA export. Modulates a complex network of chromatin modifications including histone H2B monoubiquitination (H2Bub1), H3 lysine 4 trimethylation (H3K4me3) and H3K36me3; integrates phosphorylation during transcription with chromatin modifications to control co-transcriptional histone mRNA processing. The CDK9/cyclin-K complex has also a kinase activity towards CTD of RNAP II and can substitute for CDK9/cyclin-T P-TEFb in vitro. Replication stress response protein; the CDK9/cyclin-K complex is required for genome integrity maintenance, by promoting cell cycle recovery from replication arrest and limiting single-stranded DNA amount in response to replication stress, thus reducing the breakdown of stalled replication forks and avoiding DNA damage. In addition, probable function in DNA repair of isoform 2 via interaction with KU70/XRCC6. Promotes cardiac myocyte enlargement. RPB1/POLR2A phosphorylation on 'Ser-2' in CTD activates transcription. AR phosphorylation modulates AR transcription factor promoter selectivity and cell growth. DSIF and NELF phosphorylation promotes transcription by inhibiting their negative effect. The phosphorylation of MYOD1 enhances its transcriptional activity and thus promotes muscle differentiation. Catalyzes phosphorylation of KAT5, promoting KAT5 recruitment to chromatin and histone acetyltransferase activity. In Mus musculus (Mouse), this protein is Cyclin-dependent kinase 9 (Cdk9).